Reading from the N-terminus, the 208-residue chain is Ribosome maturation factor RimM (208 aa).

Residues 98 to 205 (ADEFYVPDLI…IIEITPPDGL (108 aa)) enclose the PRC barrel domain. The interval 154-174 (LPSKSKRSRDTKNQKKNQSPP) is disordered.

The protein belongs to the RimM family. Binds ribosomal protein uS19.

The protein localises to the cytoplasm. Functionally, an accessory protein needed during the final step in the assembly of 30S ribosomal subunit, possibly for assembly of the head region. Essential for efficient processing of 16S rRNA. May be needed both before and after RbfA during the maturation of 16S rRNA. It has affinity for free ribosomal 30S subunits but not for 70S ribosomes. This Trichodesmium erythraeum (strain IMS101) protein is Ribosome maturation factor RimM.